Here is a 431-residue protein sequence, read N- to C-terminus: 23S rRNA (uracil(1939)-C(5))-methyltransferase RlmD (431 aa).

The region spanning 10-68 (RVTTRQIITVKVNDLDSFGQGVARHNGKALFIPGLLPEESAEVIITEDKKQFARARVSR) is the TRAM domain. The [4Fe-4S] cluster site is built by Cys81, Cys87, Cys90, and Cys161. S-adenosyl-L-methionine-binding residues include Gln264, Phe293, Asn298, Glu314, Asn341, and Asp362. Residue Cys388 is the Nucleophile of the active site.

The protein belongs to the class I-like SAM-binding methyltransferase superfamily. RNA M5U methyltransferase family. RlmD subfamily.

The catalysed reaction is uridine(1939) in 23S rRNA + S-adenosyl-L-methionine = 5-methyluridine(1939) in 23S rRNA + S-adenosyl-L-homocysteine + H(+). In terms of biological role, catalyzes the formation of 5-methyl-uridine at position 1939 (m5U1939) in 23S rRNA. This Salmonella choleraesuis (strain SC-B67) protein is 23S rRNA (uracil(1939)-C(5))-methyltransferase RlmD.